Here is a 342-residue protein sequence, read N- to C-terminus: Uroporphyrinogen decarboxylase (342 aa).

Substrate contacts are provided by residues 21 to 25, Asp-71, Tyr-148, Ser-203, and His-316; that span reads RQAGR.

This sequence belongs to the uroporphyrinogen decarboxylase family. In terms of assembly, homodimer.

It localises to the cytoplasm. It carries out the reaction uroporphyrinogen III + 4 H(+) = coproporphyrinogen III + 4 CO2. Its pathway is porphyrin-containing compound metabolism; protoporphyrin-IX biosynthesis; coproporphyrinogen-III from 5-aminolevulinate: step 4/4. Its function is as follows. Catalyzes the decarboxylation of four acetate groups of uroporphyrinogen-III to yield coproporphyrinogen-III. This is Uroporphyrinogen decarboxylase from Campylobacter curvus (strain 525.92).